A 74-amino-acid chain; its full sequence is uncharacterized protein (74 aa).

Residues 20–40 (IYSYTLLTLLVITLICYLIHI) traverse the membrane as a helical segment.

Belongs to the asfivirus KP93L family.

Its subcellular location is the host membrane. This is an uncharacterized protein from African swine fever virus (isolate Tick/South Africa/Pretoriuskop Pr4/1996) (ASFV).